We begin with the raw amino-acid sequence, 234 residues long: Endonuclease NucS (234 aa).

Belongs to the NucS endonuclease family.

It is found in the cytoplasm. In terms of biological role, cleaves both 3' and 5' ssDNA extremities of branched DNA structures. The chain is Endonuclease NucS from Bifidobacterium adolescentis (strain ATCC 15703 / DSM 20083 / NCTC 11814 / E194a).